Consider the following 383-residue polypeptide: Cytochrome b (383 aa).

A run of 4 helical transmembrane segments spans residues 32–52, 76–98, 113–133, and 179–199; these read FGSL…FLAM, WLIR…CHIA, TWSI…LGYV, and FFSL…AHMI. Positions 82 and 96 each coordinate heme b. Heme b-binding residues include H183 and H197. H202 lines the a ubiquinone pocket. Helical transmembrane passes span 225-245, 289-309, 321-341, and 348-368; these read FIFK…IFVC, LLGV…PLTD, LMKL…WIGA, and YLEV…FIVP.

Belongs to the cytochrome b family. Fungal cytochrome b-c1 complex contains 10 subunits; 3 respiratory subunits, 2 core proteins and 5 low-molecular weight proteins. Cytochrome b-c1 complex is a homodimer. Heme b serves as cofactor.

Its subcellular location is the mitochondrion inner membrane. Functionally, component of the ubiquinol-cytochrome c reductase complex (complex III or cytochrome b-c1 complex) that is part of the mitochondrial respiratory chain. The b-c1 complex mediates electron transfer from ubiquinol to cytochrome c. Contributes to the generation of a proton gradient across the mitochondrial membrane that is then used for ATP synthesis. This Schizophyllum commune (Split gill fungus) protein is Cytochrome b (cob).